Here is an 843-residue protein sequence, read N- to C-terminus: Glycogen phosphorylase, brain form (843 aa).

N-acetylalanine is present on A2. S15 bears the Phosphoserine; by PHK; in form phosphorylase A mark. Residues D43, Y197, and R310 each coordinate AMP. Position 197 is a phosphotyrosine (Y197). Residue Y473 is modified to Phosphotyrosine. A pyridoxal 5'-phosphate-binding site is contributed by K569. Residues 677–678 form a pyridoxal 5'-phosphate region; that stretch reads TG. An N6-(pyridoxal phosphate)lysine modification is found at K681.

This sequence belongs to the glycogen phosphorylase family. As to quaternary structure, homodimer. Dimers associate into a tetramer to form the enzymatically active phosphorylase A. It depends on pyridoxal 5'-phosphate as a cofactor. In terms of processing, phosphorylated. Phosphorylation of Ser-15 converts phosphorylase B (unphosphorylated) to phosphorylase A.

The catalysed reaction is [(1-&gt;4)-alpha-D-glucosyl](n) + phosphate = [(1-&gt;4)-alpha-D-glucosyl](n-1) + alpha-D-glucose 1-phosphate. Activity of phosphorylase is controlled both by allosteric means (through the non-covalent binding of metabolites) and by covalent modification. Thus AMP allosterically activates, whereas ATP, ADP, and glucose-6-phosphate allosterically inhibit, phosphorylase B. Activated upon phosphorylation. In terms of biological role, glycogen phosphorylase that regulates glycogen mobilization. Phosphorylase is an important allosteric enzyme in carbohydrate metabolism. Enzymes from different sources differ in their regulatory mechanisms and in their natural substrates. However, all known phosphorylases share catalytic and structural properties. This chain is Glycogen phosphorylase, brain form, found in Homo sapiens (Human).